A 116-amino-acid chain; its full sequence is UPF0499 protein ATEG_06693 (116 aa).

The first 18 residues, M1–A18, serve as a signal peptide directing secretion. 3 cysteine pairs are disulfide-bonded: C32–C46, C36–C49, and C42–C54.

It belongs to the UPF0499 family.

The protein localises to the secreted. This is UPF0499 protein ATEG_06693 from Aspergillus terreus (strain NIH 2624 / FGSC A1156).